The chain runs to 615 residues: Alpha-terpinene synthase TPS33PK, chloroplastic (615 aa).

A chloroplast-targeting transit peptide spans 1–33; it reads MFCRLGVHQFSPLSLILNTTKLARASTLSSACY. The (2E)-geranyl diphosphate site is built by glutamate 334, valine 371, leucine 375, leucine 513, and serine 516. The Mg(2+) site is built by valine 371 and leucine 375. The DDXXD motif signature appears at 371–375; it reads VYGTL. Mg(2+) contacts are provided by serine 516, methionine 520, and aspartate 524.

The protein belongs to the terpene synthase family. Tpsb subfamily. Mg(2+) is required as a cofactor. The cofactor is Mn(2+).

Its subcellular location is the plastid. It localises to the chloroplast. The enzyme catalyses (2E)-geranyl diphosphate = alpha-terpinene + diphosphate. It catalyses the reaction (2E)-geranyl diphosphate = gamma-terpinene + diphosphate. The protein operates within secondary metabolite biosynthesis; terpenoid biosynthesis. Involved in monoterpene (C10) olefins biosynthesis, constituants of cannabinoids and terpenoids-rich resins. Catalyzes mainly the conversion of (2E)-geranyl diphosphate to alpha-terpinene and gamma-terpinene. The polypeptide is Alpha-terpinene synthase TPS33PK, chloroplastic (Cannabis sativa (Hemp)).